Consider the following 403-residue polypeptide: Chaperone protein DnaJ (403 aa).

Positions 4–69 constitute a J domain; sequence DYYEILGVAR…DKRRRYDQFG (66 aa). The CR-type zinc-finger motif lies at 159 to 240; sequence GVEKTIKIKK…CYGEGIKQGE (82 aa). The Zn(2+) site is built by C172, C175, C188, C191, C214, C217, C228, and C231. CXXCXGXG motif repeat units follow at residues 172 to 179, 188 to 195, 214 to 221, and 228 to 235; these read CRECNGTG, CPTCHGSG, CPTCGGEG, and CPSCYGEG.

Belongs to the DnaJ family. In terms of assembly, homodimer. Zn(2+) serves as cofactor.

The protein resides in the cytoplasm. Participates actively in the response to hyperosmotic and heat shock by preventing the aggregation of stress-denatured proteins and by disaggregating proteins, also in an autonomous, DnaK-independent fashion. Unfolded proteins bind initially to DnaJ; upon interaction with the DnaJ-bound protein, DnaK hydrolyzes its bound ATP, resulting in the formation of a stable complex. GrpE releases ADP from DnaK; ATP binding to DnaK triggers the release of the substrate protein, thus completing the reaction cycle. Several rounds of ATP-dependent interactions between DnaJ, DnaK and GrpE are required for fully efficient folding. Also involved, together with DnaK and GrpE, in the DNA replication of plasmids through activation of initiation proteins. This is Chaperone protein DnaJ from Chlorobaculum tepidum (strain ATCC 49652 / DSM 12025 / NBRC 103806 / TLS) (Chlorobium tepidum).